The sequence spans 522 residues: Semenogelin-2 (522 aa).

Positions 1–23 (MKSIILFVLSLLLILEKQAAVMG) are cleaved as a signal peptide. 4 disordered regions span residues 26 to 62 (CGSK…SKGS), 132 to 158 (GGQA…ISSQ), 272 to 358 (NLNQ…ERHL), and 379 to 522 (EEQI…PVST). 2 stretches are compositionally biased toward polar residues: residues 31–40 (QLPSGSSQFP) and 137–158 (RGTQ…ISSQ). A compositionally biased stretch (basic and acidic residues) spans 292-310 (RTEERQLNRGEKSVQKDVS). Over residues 325 to 335 (KSQNQVTIHSQ) the composition is skewed to polar residues. A compositionally biased stretch (basic and acidic residues) spans 336–345 (GQEHGHKENK). 3 stretches are compositionally biased toward polar residues: residues 379-397 (EEQI…SQAQ), 427-436 (KDVSQSSTSF), and 446-464 (SQIQ…QNAK). 2 stretches are compositionally biased toward basic and acidic residues: residues 465 to 492 (GKSD…ESSE) and 499 to 522 (TEHE…PVST).

Belongs to the semenogelin family. In terms of assembly, interacts with SERPINA5.

The protein localises to the secreted. Its function is as follows. Participates in the formation of a gel matrix (sperm coagulum) entrapping the accessory gland secretions and ejaculated spermatozoa. This is Semenogelin-2 (SEMG2) from Hylobates klossii (Kloss's gibbon).